Reading from the N-terminus, the 94-residue chain is MSIKENSYFAGGVKSLGFNQQGQDVSVGVMLPGEYTFGTQAPERMSVVKGALIVKKAGEVDWVTYNTGEFFEVEGSSSFELQVKDATAYLCEYL.

Belongs to the nucleoside phosphorylase PpnP family.

It catalyses the reaction a purine D-ribonucleoside + phosphate = a purine nucleobase + alpha-D-ribose 1-phosphate. The catalysed reaction is adenosine + phosphate = alpha-D-ribose 1-phosphate + adenine. The enzyme catalyses cytidine + phosphate = cytosine + alpha-D-ribose 1-phosphate. It carries out the reaction guanosine + phosphate = alpha-D-ribose 1-phosphate + guanine. It catalyses the reaction inosine + phosphate = alpha-D-ribose 1-phosphate + hypoxanthine. The catalysed reaction is thymidine + phosphate = 2-deoxy-alpha-D-ribose 1-phosphate + thymine. The enzyme catalyses uridine + phosphate = alpha-D-ribose 1-phosphate + uracil. It carries out the reaction xanthosine + phosphate = alpha-D-ribose 1-phosphate + xanthine. In terms of biological role, catalyzes the phosphorolysis of diverse nucleosides, yielding D-ribose 1-phosphate and the respective free bases. Can use uridine, adenosine, guanosine, cytidine, thymidine, inosine and xanthosine as substrates. Also catalyzes the reverse reactions. The chain is Pyrimidine/purine nucleoside phosphorylase from Vibrio campbellii (strain ATCC BAA-1116).